The chain runs to 283 residues: uncharacterized protein (283 aa).

A signal peptide spans M1–S23.

It is found in the secreted. This is an uncharacterized protein from Schizosaccharomyces pombe (strain 972 / ATCC 24843) (Fission yeast).